Consider the following 469-residue polypeptide: DNA repair and recombination protein rad22 (469 aa).

The tract at residues 265-296 is disordered; the sequence is PAANNHHSEKAGTQINNKDKGSHNSAKPVQRS. Residues 287–296 are compositionally biased toward polar residues; sequence HNSAKPVQRS. Phosphoserine is present on residues S296 and S319. The tract at residues 429 to 469 is disordered; the sequence is LHDSTTSHNKSDLMRTNSDPQSAMRSRENYDATVDKKAKKG. Residues 431 to 452 are compositionally biased toward polar residues; the sequence is DSTTSHNKSDLMRTNSDPQSAM. Basic and acidic residues predominate over residues 453-469; sequence RSRENYDATVDKKAKKG.

The protein belongs to the RAD52 family. In terms of assembly, interacts with rhp51.

The protein resides in the nucleus. Functionally, active in the repair of DNA damage and in mating-type switching. Probably involved in the repair of DNA double-strands breaks. Has a role in promoting S phase completion. The chain is DNA repair and recombination protein rad22 (rad22) from Schizosaccharomyces pombe (strain 972 / ATCC 24843) (Fission yeast).